The following is a 93-amino-acid chain: Histone H2B (93 aa).

Low complexity predominate over residues 1–12 (MPEPAKSAPAPK). Residues 1–31 (MPEPAKSAPAPKKGSKKAVTKTQKKGDKKRX) form a disordered region. N6-acetyllysine is present on residues K6 and K13. Positions 13–28 (KGSKKAVTKTQKKGDK) are enriched in basic residues. The residue at position 15 (S15) is a Phosphoserine. An N6-acetyllysine mark is found at K16 and K21.

It belongs to the histone H2B family. As to quaternary structure, the nucleosome is a histone octamer containing two molecules each of H2A, H2B, H3 and H4 assembled in one H3-H4 heterotetramer and two H2A-H2B heterodimers. The octamer wraps approximately 147 bp of DNA. Monoubiquitination at the C-terminal Lys gives a specific tag for epigenetic transcriptional activation and is also prerequisite for histone H3 'Lys-4' and 'Lys-79' methylation. In terms of processing, phosphorylated on Ser-15 during apoptosis; which facilitates apoptotic chromatin condensation.

The protein resides in the nucleus. It is found in the chromosome. Functionally, core component of nucleosome. Nucleosomes wrap and compact DNA into chromatin, limiting DNA accessibility to the cellular machineries which require DNA as a template. Histones thereby play a central role in transcription regulation, DNA repair, DNA replication and chromosomal stability. DNA accessibility is regulated via a complex set of post-translational modifications of histones, also called histone code, and nucleosome remodeling. The polypeptide is Histone H2B (Crocodylus niloticus (Nile crocodile)).